An 83-amino-acid chain; its full sequence is Mitochondrial import inner membrane translocase subunit Tim8 (83 aa).

Positions 35-60 match the Twin CX3C motif motif; it reads CWDVCFADYRPPSKMDGKTQTCIQNC. Disulfide bonds link C35-C60 and C39-C56.

This sequence belongs to the small Tim family. In terms of assembly, heterohexamer; composed of 3 copies of ddp-1/tim-8 and 3 copies of tin-13/tim-13, named soluble 70 kDa complex. Associates with the TIM22 complex, whose core is composed of tim-22.

It is found in the mitochondrion inner membrane. In terms of biological role, mitochondrial intermembrane chaperone that participates in the import and insertion of some multi-pass transmembrane proteins into the mitochondrial inner membrane. Also required for the transfer of beta-barrel precursors from the TOM complex to the sorting and assembly machinery (SAM complex) of the outer membrane. Acts as a chaperone-like protein that protects the hydrophobic precursors from aggregation and guide them through the mitochondrial intermembrane space. The ddp-1/tim-8-tim-13 complex mediates the import of some proteins while the predominant tim-9/tin-9.1-tim-10/tin-10 70 kDa complex mediates the import of much more proteins. This chain is Mitochondrial import inner membrane translocase subunit Tim8, found in Caenorhabditis elegans.